The primary structure comprises 314 residues: MLGLNGTPFQPATLQLTGIPGIQTGLTWVALIFCILYMISIVGNLSILTLVFWEPALHQPMYYFLSMLALNDLGVSFSTLPTVISTFCFNYNHVAFNACLVQMFFIHTFSFMESGILLAMSLDRFVAICYPLRYVTVLTHNRILAMGLGILTKSFTTLFPFPFVVKRLPFCKGNVLHHSYCLHPDLMKVACGDIHVNNIYGLLVIIFTYGMDSTFILLSYALILRAMLVIISQEQRLKALNTCMSHICAVLAFYVPIIAVSMIHRFWKSAPPVVHVMMSNVYLFVPPMLNPIIYSVKTKEIRKGILKFFHKSQA.

At 1–27 the chain is on the extracellular side; it reads MLGLNGTPFQPATLQLTGIPGIQTGLT. A helical membrane pass occupies residues 28 to 48; the sequence is WVALIFCILYMISIVGNLSIL. Over 49–56 the chain is Cytoplasmic; it reads TLVFWEPA. The helical transmembrane segment at 57 to 77 threads the bilayer; that stretch reads LHQPMYYFLSMLALNDLGVSF. The Extracellular segment spans residues 78–101; that stretch reads STLPTVISTFCFNYNHVAFNACLV. A disulfide bridge connects residues C99 and C191. Residues 102 to 122 form a helical membrane-spanning segment; that stretch reads QMFFIHTFSFMESGILLAMSL. Residues 123–141 lie on the Cytoplasmic side of the membrane; it reads DRFVAICYPLRYVTVLTHN. A helical transmembrane segment spans residues 142-162; sequence RILAMGLGILTKSFTTLFPFP. The Extracellular portion of the chain corresponds to 163–198; the sequence is FVVKRLPFCKGNVLHHSYCLHPDLMKVACGDIHVNN. The helical transmembrane segment at 199–219 threads the bilayer; it reads IYGLLVIIFTYGMDSTFILLS. At 220-239 the chain is on the cytoplasmic side; it reads YALILRAMLVIISQEQRLKA. The helical transmembrane segment at 240–260 threads the bilayer; sequence LNTCMSHICAVLAFYVPIIAV. The Extracellular segment spans residues 261 to 275; it reads SMIHRFWKSAPPVVH. A helical transmembrane segment spans residues 276 to 296; that stretch reads VMMSNVYLFVPPMLNPIIYSV. Topologically, residues 297 to 314 are cytoplasmic; sequence KTKEIRKGILKFFHKSQA.

This sequence belongs to the G-protein coupled receptor 1 family.

The protein resides in the cell membrane. Functionally, odorant receptor. This is Olfactory receptor 51I1 (OR51I1) from Homo sapiens (Human).